A 383-amino-acid chain; its full sequence is Dual-specificity RNA methyltransferase RlmN (383 aa).

Glu-95 serves as the catalytic Proton acceptor. The Radical SAM core domain maps to Glu-101–Asp-349. A disulfide bridge links Cys-108 with Cys-354. [4Fe-4S] cluster contacts are provided by Cys-115, Cys-119, and Cys-122. S-adenosyl-L-methionine is bound by residues Gly-180 to Glu-181, Ser-212, Ser-234 to His-236, and Asn-311. Cys-354 functions as the S-methylcysteine intermediate in the catalytic mechanism.

Belongs to the radical SAM superfamily. RlmN family. Requires [4Fe-4S] cluster as cofactor.

It is found in the cytoplasm. The catalysed reaction is adenosine(2503) in 23S rRNA + 2 reduced [2Fe-2S]-[ferredoxin] + 2 S-adenosyl-L-methionine = 2-methyladenosine(2503) in 23S rRNA + 5'-deoxyadenosine + L-methionine + 2 oxidized [2Fe-2S]-[ferredoxin] + S-adenosyl-L-homocysteine. It carries out the reaction adenosine(37) in tRNA + 2 reduced [2Fe-2S]-[ferredoxin] + 2 S-adenosyl-L-methionine = 2-methyladenosine(37) in tRNA + 5'-deoxyadenosine + L-methionine + 2 oxidized [2Fe-2S]-[ferredoxin] + S-adenosyl-L-homocysteine. Specifically methylates position 2 of adenine 2503 in 23S rRNA and position 2 of adenine 37 in tRNAs. m2A2503 modification seems to play a crucial role in the proofreading step occurring at the peptidyl transferase center and thus would serve to optimize ribosomal fidelity. This is Dual-specificity RNA methyltransferase RlmN from Paraburkholderia phytofirmans (strain DSM 17436 / LMG 22146 / PsJN) (Burkholderia phytofirmans).